The following is a 232-amino-acid chain: Succinyl-CoA:3-ketoacid coenzyme A transferase subunit A (232 aa).

CoA is bound at residue 24–30 (GGFGLCG).

Belongs to the 3-oxoacid CoA-transferase subunit A family. Heterodimer of a subunit A and a subunit B.

The catalysed reaction is a 3-oxo acid + succinyl-CoA = a 3-oxoacyl-CoA + succinate. This is Succinyl-CoA:3-ketoacid coenzyme A transferase subunit A (scoA) from Helicobacter pylori (strain ATCC 700392 / 26695) (Campylobacter pylori).